A 406-amino-acid chain; its full sequence is Cysteine desulfurase (406 aa).

Lys226 is modified (N6-(pyridoxal phosphate)lysine). The Cysteine persulfide intermediate role is filled by Cys364.

It belongs to the class-V pyridoxal-phosphate-dependent aminotransferase family. Csd subfamily. Homodimer. Interacts with SufE and the SufBCD complex composed of SufB, SufC and SufD. The interaction with SufE is required to mediate the direct transfer of the sulfur atom from the S-sulfanylcysteine. Pyridoxal 5'-phosphate is required as a cofactor.

Its subcellular location is the cytoplasm. The catalysed reaction is (sulfur carrier)-H + L-cysteine = (sulfur carrier)-SH + L-alanine. The enzyme catalyses L-selenocysteine + AH2 = hydrogenselenide + L-alanine + A + H(+). It functions in the pathway cofactor biosynthesis; iron-sulfur cluster biosynthesis. In terms of biological role, cysteine desulfurases mobilize the sulfur from L-cysteine to yield L-alanine, an essential step in sulfur metabolism for biosynthesis of a variety of sulfur-containing biomolecules. Component of the suf operon, which is activated and required under specific conditions such as oxidative stress and iron limitation. Acts as a potent selenocysteine lyase in vitro, that mobilizes selenium from L-selenocysteine. Selenocysteine lyase activity is however unsure in vivo. This chain is Cysteine desulfurase, found in Yersinia pseudotuberculosis serotype O:1b (strain IP 31758).